We begin with the raw amino-acid sequence, 293 residues long: 33 kDa chaperonin (293 aa).

2 disulfide bridges follow: Cys-237–Cys-239 and Cys-271–Cys-274.

It belongs to the HSP33 family. Post-translationally, under oxidizing conditions two disulfide bonds are formed involving the reactive cysteines. Under reducing conditions zinc is bound to the reactive cysteines and the protein is inactive.

It is found in the cytoplasm. Its function is as follows. Redox regulated molecular chaperone. Protects both thermally unfolding and oxidatively damaged proteins from irreversible aggregation. Plays an important role in the bacterial defense system toward oxidative stress. In Haemophilus influenzae (strain 86-028NP), this protein is 33 kDa chaperonin.